We begin with the raw amino-acid sequence, 285 residues long: Phosphoribosylaminoimidazole-succinocarboxamide synthase (285 aa).

Belongs to the SAICAR synthetase family.

The enzyme catalyses 5-amino-1-(5-phospho-D-ribosyl)imidazole-4-carboxylate + L-aspartate + ATP = (2S)-2-[5-amino-1-(5-phospho-beta-D-ribosyl)imidazole-4-carboxamido]succinate + ADP + phosphate + 2 H(+). Its pathway is purine metabolism; IMP biosynthesis via de novo pathway; 5-amino-1-(5-phospho-D-ribosyl)imidazole-4-carboxamide from 5-amino-1-(5-phospho-D-ribosyl)imidazole-4-carboxylate: step 1/2. The protein is Phosphoribosylaminoimidazole-succinocarboxamide synthase of Leptospira interrogans serogroup Icterohaemorrhagiae serovar copenhageni (strain Fiocruz L1-130).